We begin with the raw amino-acid sequence, 313 residues long: uncharacterized protein (313 aa).

A divalent metal cation is bound by residues histidine 8, histidine 10, glutamate 126, histidine 180, histidine 207, and aspartate 262.

Belongs to the metallo-dependent hydrolases superfamily. TatD-type hydrolase family. Requires a divalent metal cation as cofactor.

Its function is as follows. Putative deoxyribonuclease. This is an uncharacterized protein from Saccharomyces cerevisiae (strain ATCC 204508 / S288c) (Baker's yeast).